A 196-amino-acid polypeptide reads, in one-letter code: Large ribosomal subunit protein bL25 (196 aa).

This sequence belongs to the bacterial ribosomal protein bL25 family. CTC subfamily. As to quaternary structure, part of the 50S ribosomal subunit; part of the 5S rRNA/L5/L18/L25 subcomplex. Contacts the 5S rRNA. Binds to the 5S rRNA independently of L5 and L18.

Its function is as follows. This is one of the proteins that binds to the 5S RNA in the ribosome where it forms part of the central protuberance. The protein is Large ribosomal subunit protein bL25 of Geotalea daltonii (strain DSM 22248 / JCM 15807 / FRC-32) (Geobacter daltonii).